A 437-amino-acid polypeptide reads, in one-letter code: MSEVLPLITRRGDRIAFVSGLRTPFARQATAYHGVPAIELGKLVTSELLVRTGIDPELIELLVFGQVVQMPEAPNIAREIVLGTGMSVHTDAYSVSRACATSFQAVANVAESIMAGTVEVGIAGGADSSSVLPIGVSKALARTLVDMNKARTLGQKLRLLSGLRPKDLLPVAPAVAEYSTGLRMGDTAEQMAKTYGITREEQDELAHRSHKLAAQAWESGVLRDEVMTAYVPPYEKALSEDNNVRHDSAIEQYSRLRPAFDRRHGTVTAANSTPLTDGAAAVLMMSESKAKSLGLTPLGYLRSYAFSAIGVQRDMLLGPAYASPLALARAGVALADLTLIDMHEAFAAQTLANLKLFASDEFARNQLGRNAALGEVDRAKFNVLGGSIAYGHPFAATGARMITQTLNELRRRGGGLGLTTACAAGGLGAAMVLEVTP.

The active-site Acyl-thioester intermediate is Cys99. Catalysis depends on proton acceptor residues His392 and Cys422.

This sequence belongs to the thiolase-like superfamily. Thiolase family. Heterotetramer of two alpha chains (FadJ) and two beta chains (FadI).

Its subcellular location is the cytoplasm. It carries out the reaction an acyl-CoA + acetyl-CoA = a 3-oxoacyl-CoA + CoA. The protein operates within lipid metabolism; fatty acid beta-oxidation. Its function is as follows. Catalyzes the final step of fatty acid oxidation in which acetyl-CoA is released and the CoA ester of a fatty acid two carbons shorter is formed. This Pectobacterium atrosepticum (strain SCRI 1043 / ATCC BAA-672) (Erwinia carotovora subsp. atroseptica) protein is 3-ketoacyl-CoA thiolase.